Here is a 192-residue protein sequence, read N- to C-terminus: MTRMLIIGPPGSGKGTQAERISERLGVVAISTGDIFRANVKGETPLGIEAKKYMDNGDFVPDSVTNKMVRDRLSESDVESGFLLDGYPRTTAQVDYLDEILAKNEEKLDVVLQLTADDEELVHRLLGRAKETGRSDDNEAVIRHRLDLYHEQTEAVVAKYAERGILTQVDGIGPIDEVTDRVMQAIKAAQAA.

Position 11-16 (11-16 (GSGKGT)) interacts with ATP. The interval 31–60 (STGDIFRANVKGETPLGIEAKKYMDNGDFV) is NMP. AMP-binding positions include Thr-32, Arg-37, 58 to 60 (DFV), 86 to 89 (GYPR), and Gln-93. Positions 127 to 137 (GRAKETGRSDD) are LID. ATP is bound at residue Arg-128. Residues Arg-134 and Arg-145 each contribute to the AMP site. Gly-173 contributes to the ATP binding site.

This sequence belongs to the adenylate kinase family. In terms of assembly, monomer.

It is found in the cytoplasm. The catalysed reaction is AMP + ATP = 2 ADP. It functions in the pathway purine metabolism; AMP biosynthesis via salvage pathway; AMP from ADP: step 1/1. In terms of biological role, catalyzes the reversible transfer of the terminal phosphate group between ATP and AMP. Plays an important role in cellular energy homeostasis and in adenine nucleotide metabolism. This is Adenylate kinase from Pseudarthrobacter chlorophenolicus (strain ATCC 700700 / DSM 12829 / CIP 107037 / JCM 12360 / KCTC 9906 / NCIMB 13794 / A6) (Arthrobacter chlorophenolicus).